A 232-amino-acid polypeptide reads, in one-letter code: Large ribosomal subunit protein uL1 (232 aa).

The protein belongs to the universal ribosomal protein uL1 family. In terms of assembly, part of the 50S ribosomal subunit.

In terms of biological role, binds directly to 23S rRNA. The L1 stalk is quite mobile in the ribosome, and is involved in E site tRNA release. Functionally, protein L1 is also a translational repressor protein, it controls the translation of the L11 operon by binding to its mRNA. In Lysinibacillus sphaericus (strain C3-41), this protein is Large ribosomal subunit protein uL1.